The primary structure comprises 745 residues: Jacalin-related lectin 4 (745 aa).

5 consecutive Jacalin-type lectin domains span residues A2–P148, P151–P294, A307–T448, P451–R594, and A601–P744.

It belongs to the jacalin lectin family.

The sequence is that of Jacalin-related lectin 4 (JAL4) from Arabidopsis thaliana (Mouse-ear cress).